The chain runs to 942 residues: E3 ubiquitin-protein ligase HACE1 (942 aa).

ANK repeat units follow at residues 23–55 (LPDDNETAVYTLMPMVMADQHRSVSELLSNSKF), 64–93 (VKRSLLHIAANCGSVECLVLLLKKGANPNY), 97–126 (SGCTPLHLAARNGQKKCMSKLLEYSADVNI), 130–159 (EGLTAIHWLAVNGRTELLHDLVQHVSNVDV), 163–192 (MGQTALHVACQNGHKTTVQCLLDSGADINR), 196–226 (SGATPLYFACSHGQRDTAQILLMRGAKYLPD), and 228–253 (NGITPLDLCVQGGYGETCEVLIQYHP). The tract at residues 428–459 (KGPDHQDATPTPSFAAAGTESRKELSTDTGDS) is disordered. Residues 447–459 (ESRKELSTDTGDS) are compositionally biased toward basic and acidic residues. An HECT domain is found at 607 to 942 (NCAKLKQGIA…HCGSYGYTMA (336 aa)). The active-site Glycyl thioester intermediate is the C909.

It localises to the golgi apparatus. The protein resides in the golgi stack membrane. It is found in the cytoplasm. Its subcellular location is the endoplasmic reticulum. It catalyses the reaction S-ubiquitinyl-[E2 ubiquitin-conjugating enzyme]-L-cysteine + [acceptor protein]-L-lysine = [E2 ubiquitin-conjugating enzyme]-L-cysteine + N(6)-ubiquitinyl-[acceptor protein]-L-lysine.. Its pathway is protein modification; protein ubiquitination. In terms of biological role, E3 ubiquitin-protein ligase involved in Golgi membrane fusion and regulation of small GTPases. Acts as a regulator of Golgi membrane dynamics during the cell cycle: recruited to Golgi membrane by Rab proteins and regulates postmitotic Golgi membrane fusion. Acts by mediating ubiquitination during mitotic Golgi disassembly, ubiquitination serving as a signal for Golgi reassembly later, after cell division. The chain is E3 ubiquitin-protein ligase HACE1 (HACE1) from Gallus gallus (Chicken).